The sequence spans 117 residues: uncharacterized protein (117 aa).

Residues 1 to 19 show a composition bias toward polar residues; that stretch reads MTSNPSSSADQPLSGTTVP. Residues 1 to 28 form a disordered region; that stretch reads MTSNPSSSADQPLSGTTVPGSVPGKAPE. A run of 2 helical transmembrane segments spans residues 38-58 and 76-96; these read AAVWSALIVGFLILILLLIFI and LPLGVAILLAAVGGGLITVFA.

It is found in the cell membrane. This is an uncharacterized protein from Mycobacterium tuberculosis (strain ATCC 25618 / H37Rv).